Here is a 245-residue protein sequence, read N- to C-terminus: Phycocyanobilin:ferredoxin oxidoreductase (245 aa).

The protein belongs to the HY2 family.

It carries out the reaction (2R,3Z)-phycocyanobilin + 4 oxidized [2Fe-2S]-[ferredoxin] = biliverdin IXalpha + 4 reduced [2Fe-2S]-[ferredoxin] + 4 H(+). Catalyzes the four-electron reduction of biliverdin IX-alpha (2-electron reduction at both the A and D rings); the reaction proceeds via an isolatable 2-electron intermediate, 181,182-dihydrobiliverdin. In Rippkaea orientalis (strain PCC 8801 / RF-1) (Cyanothece sp. (strain PCC 8801)), this protein is Phycocyanobilin:ferredoxin oxidoreductase.